We begin with the raw amino-acid sequence, 299 residues long: Taste receptor type 2 member 5 (299 aa).

Residue Met-1 is a topological domain, extracellular. Residues 2–22 (LSAGLGLLMLVAVVEFLIGLI) form a helical membrane-spanning segment. The Cytoplasmic segment spans residues 23 to 45 (GNGVLVVWSFREWMRKFNWSSYN). The helical transmembrane segment at 46 to 66 (LIILGLAGCRFLLQWLIILDL) threads the bilayer. Over 67-82 (SLFPLFQSSRWLRYLS) the chain is Extracellular. The chain crosses the membrane as a helical span at residues 83-103 (IFWVLVSQASLWFATFLSVFY). At 104–127 (CKKITTFDRPAYLWLKQRAYNLSL) the chain is on the cytoplasmic side. A helical membrane pass occupies residues 128-148 (WCLLGYFIINLLLTVQIGLMF). At 149–175 (YHPPQGNSSIRYPFESWQYLYAFRLNS) the chain is on the extracellular side. An N-linked (GlcNAc...) asparagine glycan is attached at Asn-155. Residues 176 to 196 (GSYLPLMVFLVSSGMLIVSLY) form a helical membrane-spanning segment. The Cytoplasmic segment spans residues 197-223 (THHKKMKVHSAGRRDVRAKAHITALKS). Residues 224–244 (LGCFLFLHLVYIMASPFSITS) form a helical membrane-spanning segment. Residues 245-253 (KTYPPDLTS) are Extracellular-facing. A helical transmembrane segment spans residues 254 to 274 (VFIWETLMAAYPSLHSLILIM). Residues 275 to 299 (GIPRVKQTCQKILWKTVCARRCWGP) lie on the Cytoplasmic side of the membrane.

The protein belongs to the G-protein coupled receptor T2R family.

The protein resides in the membrane. Functionally, receptor that may play a role in the perception of bitterness and is gustducin-linked. May play a role in sensing the chemical composition of the gastrointestinal content. The activity of this receptor may stimulate alpha gustducin, mediate PLC-beta-2 activation and lead to the gating of TRPM5. The sequence is that of Taste receptor type 2 member 5 (TAS2R5) from Gorilla gorilla gorilla (Western lowland gorilla).